The primary structure comprises 327 residues: D-threonate 4-phosphate dehydrogenase (327 aa).

Residues histidine 139 and threonine 140 each contribute to the substrate site. Residues histidine 169, histidine 213, and histidine 268 each contribute to the a divalent metal cation site. Substrate contacts are provided by lysine 276, asparagine 285, and arginine 294.

Belongs to the PdxA family. PdxA2 subfamily. As to quaternary structure, homodimer. A divalent metal cation serves as cofactor.

The enzyme catalyses 4-O-phospho-D-threonate + NAD(+) = dihydroxyacetone phosphate + CO2 + NADH. Catalyzes the NAD-dependent oxidation and subsequent decarboxylation of D-threonate 4-phosphate to produce dihydroxyacetone phosphate (DHAP). Can also use 4-hydroxy-L-threonine 4-phosphate as substrate. The chain is D-threonate 4-phosphate dehydrogenase from Salmonella typhimurium (strain LT2 / SGSC1412 / ATCC 700720).